A 1286-amino-acid polypeptide reads, in one-letter code: Autotransporter adhesin AIDA-I (1286 aa).

The first 49 residues, 1-49 (MNKAYSIIWSHSRQAWIVASELARGHGFVLAKNTLLVLAVVSTIGNAFA), serve as a signal peptide directing secretion. O-alpha-linked (glycero-D-manno-heptose) serine glycans are attached at residues serine 102, serine 111, and serine 116. O-alpha-linked (glycero-D-manno-heptose) threonine glycosylation occurs at threonine 154. O-alpha-linked (glycero-D-manno-heptose) serine glycans are attached at residues serine 242, serine 252, serine 334, serine 391, serine 409, serine 539, serine 545, serine 558, serine 569, serine 576, serine 577, and serine 582. The Autotransporter domain maps to 998-1286 (TQPESASVWM…SGALGIKYSF (289 aa)). A beta stranded transmembrane segment spans residues 1006–1012 (WMKITGG). At 1013–1029 (ISSGKLNDGQNKTTTNQ) the chain is on the extracellular side. Residues 1030 to 1040 (FINQLGGDIYK) traverse the membrane as a beta stranded segment. The Periplasmic portion of the chain corresponds to 1041–1047 (FHAEQLG). The beta stranded transmembrane segment at 1048–1058 (DFTLGIMGGYA) threads the bilayer. Topologically, residues 1059-1079 (NAKGKTINYTSNKAARNTLDG) are extracellular. A beta stranded transmembrane segment spans residues 1080–1087 (YSVGVYGT). Residues 1088-1097 (WYQNGENATG) are Periplasmic-facing. The beta stranded transmembrane segment at 1098–1108 (LFAETWMQYNW) threads the bilayer. At 1109 to 1126 (FNASVKGDGLEEEKYNLN) the chain is on the extracellular side. The chain crosses the membrane as a beta stranded span at residues 1127–1138 (GLTASAGGGYNL). The Periplasmic segment spans residues 1139-1152 (NVHTWTSPEGITGE). A beta stranded transmembrane segment spans residues 1153-1164 (FWLQPHLQAVWM). Residues 1165–1186 (GVTPDTHQEDNGTVVQGAGKNN) are Extracellular-facing. Residues 1187-1198 (IQTKAGIRASWK) form a beta stranded membrane-spanning segment. Topologically, residues 1199-1210 (VKSTLDKDTGRR) are periplasmic. The chain crosses the membrane as a beta stranded span at residues 1211-1221 (FRPYIEANWIH). Over 1222-1242 (NTHEFGVKMSDDSQLLSGSRN) the chain is Extracellular. The beta stranded transmembrane segment at 1243-1253 (QGEIKTGIEGV) threads the bilayer. Topologically, residues 1254–1259 (ITQNLS) are periplasmic. The chain crosses the membrane as a beta stranded span at residues 1260–1267 (VNGGVAYQ). The Extracellular segment spans residues 1268–1275 (AGGHGSNA). A beta stranded membrane pass occupies residues 1276–1284 (ISGALGIKY). Residues 1285-1286 (SF) are Periplasmic-facing.

In terms of assembly, intercellular AIDA-AIDA interaction is responsible for bacterial autoaggregation. AIDA can also interact with antigen 43 (Ag43), and the resultant intercellular AIDA-Ag43 interaction causes cell aggregation. Post-translationally, glycosylated on serine residues by AHH and AAH2 in the cytoplasm. Glycosylated with an average of 19 heptose residues. Glycosylated with either ADP-L, D-heptose or ADP-D, D-heptose. Glycosylation is required for protein folding/stabilization and resistance to protease-mediated degradation. Glycosylation is required for bacteria adhesion to mammalian cells. Glycosylation is dispensable for cell outer membrane localization. Glycosylation is dispensable for AIDA-mediated cell-cell aggregation and induction of biofilm formation. Glycosylation is dispensable for interaction with Ag43.

The protein localises to the periplasm. It is found in the secreted. The protein resides in the cell surface. Its subcellular location is the cell outer membrane. Its function is as follows. Potent bacterial adhesin that mediates bacterial attachment to a broad variety of human and other mammalian cells. Has additional virulence properties, as it is capable of mediating bacterial autoaggregation via intercellular self-recognition and it is a highly efficient initiator of biofilm formation. The polypeptide is Autotransporter adhesin AIDA-I (aidA) (Escherichia coli).